A 378-amino-acid polypeptide reads, in one-letter code: D-galactarolactone cycloisomerase (378 aa).

D194, E220, and E246 together coordinate Mg(2+). Catalysis depends on H296, which acts as the Proton acceptor.

It belongs to the mandelate racemase/muconate lactonizing enzyme family. Homooctamer. Mg(2+) is required as a cofactor.

The enzyme catalyses D-glucaro-1,4-lactone = 5-dehydro-4-deoxy-D-glucarate + H(+). The catalysed reaction is D-galactaro-1,4-lactone = 5-dehydro-4-deoxy-D-glucarate + H(+). It functions in the pathway carbohydrate acid metabolism; D-galacturonate degradation via prokaryotic oxidative pathway. Its function is as follows. Catalyzes the ring opening of D-galactaro-1,4-lactone to yield 5-keto-4-deoxy-D-glucarate (KDG) via a beta-elimination reaction. This is a step in the oxidative degradation pathway of D-galacturonate, which allows A.tumefaciens to utilize D-galacturonate as a sole carbon source. To a lesser extent, can also use D-glucaro-1,4-lactone as substrate to produce KDG, but cannot use D-galactaro-1,5-lactone, D-glucaro-6,3-lactone and linear D-glucarate. The protein is D-galactarolactone cycloisomerase (gci) of Agrobacterium fabrum (strain C58 / ATCC 33970) (Agrobacterium tumefaciens (strain C58)).